The following is a 352-amino-acid chain: tRNA uridine(34) hydroxylase (352 aa).

The 95-residue stretch at 144-238 (SDPDVILIDT…YLEEVPASDS (95 aa)) folds into the Rhodanese domain. The Cysteine persulfide intermediate role is filled by Cys198.

Belongs to the TrhO family.

It carries out the reaction uridine(34) in tRNA + AH2 + O2 = 5-hydroxyuridine(34) in tRNA + A + H2O. In terms of biological role, catalyzes oxygen-dependent 5-hydroxyuridine (ho5U) modification at position 34 in tRNAs. This Psychrobacter cryohalolentis (strain ATCC BAA-1226 / DSM 17306 / VKM B-2378 / K5) protein is tRNA uridine(34) hydroxylase.